The primary structure comprises 276 residues: Protease HtpX homolog (276 aa).

Residues 16–36 form a helical membrane-spanning segment; that stretch reads LFIWFGGMIAGQTGMVIAFLV. Zn(2+) is bound at residue His130. Residue Glu131 is part of the active site. Residue His134 coordinates Zn(2+). 2 consecutive transmembrane segments (helical) span residues 142–162 and 173–193; these read IGTVAATIAGAIAMLANFGMF and IFVMLALMFIMPMAASIIQMT. Position 199 (Glu199) interacts with Zn(2+).

It belongs to the peptidase M48B family. Requires Zn(2+) as cofactor.

The protein localises to the cell inner membrane. The chain is Protease HtpX homolog from Sulfurovum sp. (strain NBC37-1).